Here is a 1031-residue protein sequence, read N- to C-terminus: MKLSFSLVFNALTLLLQVCIFAQARFSNETDMQALLEFKSQVSENNKREVLASWNHSSPFCNWIGVTCGRRRERVISLNLGGFKLTGVISPSIGNLSFLRLLNLADNSFGSTIPQKVGRLFRLQYLNMSYNLLEGRIPSSLSNCSRLSTVDLSSNHLGHGVPSELGSLSKLAILDLSKNNLTGNFPASLGNLTSLQKLDFAYNQMRGEIPDEVARLTQMVFFQIALNSFSGGFPPALYNISSLESLSLADNSFSGNLRADFGYLLPNLRRLLLGTNQFTGAIPKTLANISSLERFDISSNYLSGSIPLSFGKLRNLWWLGIRNNSLGNNSSSGLEFIGAVANCTQLEYLDVGYNRLGGELPASIANLSTTLTSLFLGQNLISGTIPHDIGNLVSLQELSLETNMLSGELPVSFGKLLNLQVVDLYSNAISGEIPSYFGNMTRLQKLHLNSNSFHGRIPQSLGRCRYLLDLWMDTNRLNGTIPQEILQIPSLAYIDLSNNFLTGHFPEEVGKLELLVGLGASYNKLSGKMPQAIGGCLSMEFLFMQGNSFDGAIPDISRLVSLKNVDFSNNNLSGRIPRYLASLPSLRNLNLSMNKFEGRVPTTGVFRNATAVSVFGNTNICGGVREMQLKPCIVQASPRKRKPLSVRKKVVSGICIGIASLLLIIIVASLCWFMKRKKKNNASDGNPSDSTTLGMFHEKVSYEELHSATSRFSSTNLIGSGNFGNVFKGLLGPENKLVAVKVLNLLKHGATKSFMAECETFKGIRHRNLVKLITVCSSLDSEGNDFRALVYEFMPKGSLDMWLQLEDLERVNDHSRSLTPAEKLNIAIDVASALEYLHVHCHDPVAHCDIKPSNILLDDDLTAHVSDFGLAQLLYKYDRESFLNQFSSAGVRGTIGYAAPEYGMGGQPSIQGDVYSFGILLLEMFSGKKPTDESFAGDYNLHSYTKSILSGCTSSGGSNAIDEGLRLVLQVGIKCSEEYPRDRMRTDEAVRELISIRSKFFSSKTTITESPRDAPQSSPQEWMLNTDMHTM.

An N-terminal signal peptide occupies residues 1–24; sequence MKLSFSLVFNALTLLLQVCIFAQA. The Extracellular portion of the chain corresponds to 25-653; it reads RFSNETDMQA…LSVRKKVVSG (629 aa). Residues Asn-28, Asn-55, and Asn-95 are each glycosylated (N-linked (GlcNAc...) asparagine). 10 LRR repeats span residues 98–120, 122–144, 146–168, 170–193, 194–216, 218–240, 242–264, 267–289, 291–312, and 315–335; these read FLRL…VGRL, RLQY…LSNC, RLST…LGSL, KLAI…GNLT, SLQK…VARL, QMVF…LYNI, SLES…FGYL, NLRR…LANI, SLER…SFGK, and NLWW…SGLE. 2 N-linked (GlcNAc...) asparagine glycosylation sites follow: Asn-127 and Asn-143. 2 N-linked (GlcNAc...) asparagine glycosylation sites follow: Asn-180 and Asn-191. Asn-239 carries N-linked (GlcNAc...) asparagine glycosylation. N-linked (GlcNAc...) asparagine glycosylation occurs at Asn-288. Residues Asn-323, Asn-329, Asn-342, and Asn-366 are each glycosylated (N-linked (GlcNAc...) asparagine). 11 LRR repeats span residues 345 to 368, 370 to 392, 394 to 416, 418 to 440, 442 to 464, 466 to 487, 490 to 512, 514 to 536, 538 to 560, 561 to 584, and 585 to 597; these read QLEY…ANLS, TLTS…IGNL, SLQE…FGKL, NLQV…FGNM, RLQK…LGRC, YLLD…EILQ, SLAY…VGKL, LLVG…IGGC, SMEF…SRLV, SLKN…ASLP, and SLRN…NKFE. Asn-439 is a glycosylation site (N-linked (GlcNAc...) asparagine). Residue Asn-478 is glycosylated (N-linked (GlcNAc...) asparagine). 3 N-linked (GlcNAc...) asparagine glycosylation sites follow: Asn-571, Asn-590, and Asn-608. Residues 654-674 traverse the membrane as a helical segment; that stretch reads ICIGIASLLLIIIVASLCWFM. The Cytoplasmic portion of the chain corresponds to 675–1031; the sequence is KRKKKNNASD…WMLNTDMHTM (357 aa). At Thr-709 the chain carries Phosphothreonine. In terms of domain architecture, Protein kinase spans 712–1001; that stretch reads FSSTNLIGSG…ELISIRSKFF (290 aa). ATP is bound by residues 718-726 and Lys-741; that span reads IGSGNFGNV. Tyr-791 and Tyr-836 each carry phosphotyrosine. Asp-849 functions as the Proton acceptor in the catalytic mechanism. Tyr-897 is modified (phosphotyrosine). A compositionally biased stretch (polar residues) spans 1005–1020; it reads TTITESPRDAPQSSPQ. Residues 1005-1031 are disordered; that stretch reads TTITESPRDAPQSSPQEWMLNTDMHTM.

The protein belongs to the protein kinase superfamily. Ser/Thr protein kinase family. As to quaternary structure, binds to Pseudomonas syringae AvrPto1 and (via the kinase and cytoplasmic domains) to hopD2. Interacts with SERK3/BAK1, SERK4/BKK1, SERK1 and SERK2 in a specific ligand-induced manner. Binds to IOS1. Binds to BIK1 in the absence of pathogen elicitor; dissociates upon pathogen-associated molecular pattern (PAMP)-triggered activation. In terms of processing, autophosphorylated after elicitation with elfl18. Autophosphorylation is inhibited by the binding with avrPto1. Phosphorylation at T-836 is required for immune signaling. Polyubiquitinated at the kinase domain mediated by P.syringae AvrPtoB.

The protein localises to the cell membrane. It localises to the endomembrane system. The catalysed reaction is L-seryl-[protein] + ATP = O-phospho-L-seryl-[protein] + ADP + H(+). It carries out the reaction L-threonyl-[protein] + ATP = O-phospho-L-threonyl-[protein] + ADP + H(+). Constitutes the pattern-recognition receptor (PPR) that determines the specific perception of elongation factor Tu (EF-Tu), a potent elicitor of the defense response to pathogen-associated molecular patterns (PAMPs); phosphorylates BIK1 upon elicitation to regulate immune responses such as defense hormone expression (e.g. jasmonic acid (JA) and salicylic acid (SA)). Reduces transformation by Rhizobium radiobacter probably by inducing plant defense during the interaction. Binding to the effector AvrPto1 from P.syringae blocks the downstream plant immune response while interaction with hopD2 decreases the phosphorylation level of EFR upon elf18 treatment. Specific endoplasmic reticulum quality control components (ERD2B, CRT3, UGGT and STT3A) are required for the biogenesis of EFR. The sequence is that of LRR receptor-like serine/threonine-protein kinase EFR from Arabidopsis thaliana (Mouse-ear cress).